The chain runs to 145 residues: Basic phospholipase A2 cPt09 (145 aa).

The N-terminal stretch at 1–21 (MYPAHLLVLLAVCVSLLGAST) is a signal peptide. The propeptide occupies 22-27 (IPPLPL). 7 disulfides stabilise this stretch: cysteine 38/cysteine 98, cysteine 54/cysteine 144, cysteine 56/cysteine 72, cysteine 71/cysteine 125, cysteine 78/cysteine 118, cysteine 87/cysteine 111, and cysteine 105/cysteine 116. Ca(2+)-binding residues include tyrosine 55, glycine 57, and glycine 59. Histidine 75 is an active-site residue. A Ca(2+)-binding site is contributed by aspartate 76. The active site involves aspartate 119.

Belongs to the phospholipase A2 family. Group I subfamily. D49 sub-subfamily. Ca(2+) serves as cofactor. In terms of tissue distribution, expressed by the venom gland.

It localises to the secreted. The enzyme catalyses a 1,2-diacyl-sn-glycero-3-phosphocholine + H2O = a 1-acyl-sn-glycero-3-phosphocholine + a fatty acid + H(+). Its function is as follows. PLA2 catalyzes the calcium-dependent hydrolysis of the 2-acyl groups in 3-sn-phosphoglycerides. In Laticauda semifasciata (Black-banded sea krait), this protein is Basic phospholipase A2 cPt09.